Consider the following 344-residue polypeptide: Zinc metalloproteinase nas-6 (344 aa).

The N-terminal stretch at 1-19 (MLDHVLLLTYCLVSTVVRS) is a signal peptide. Positions 72–266 (NALKNKQLTW…VKINKLYSCK (195 aa)) constitute a Peptidase M12A domain. Cystine bridges form between Cys114–Cys265, Cys135–Cys154, Cys300–Cys334, Cys307–Cys327, and Cys314–Cys331. His162 provides a ligand contact to Zn(2+). Residue Glu163 is part of the active site. The Zn(2+) site is built by His166 and His172. The ShKT domain occupies 300–334 (CVDHFADCPHFAQYCTRASFFFVMKSYCPFTCKHC).

Zn(2+) is required as a cofactor. In terms of tissue distribution, expressed in pharyngeal and body wall muscles, intestine, hypodermis and pharyngeal mc2 cells.

The protein localises to the secreted. In terms of biological role, metalloprotease. This is Zinc metalloproteinase nas-6 (nas-6) from Caenorhabditis elegans.